The primary structure comprises 586 residues: Protein HOL1 (586 aa).

The Extracellular portion of the chain corresponds to Met1–His66. The helical transmembrane segment at Phe67 to Ala87 threads the bilayer. Residues Gln88–Asn103 are Cytoplasmic-facing. Residues Thr104–Ala124 traverse the membrane as a helical segment. Residues Asn125–Lys130 are Extracellular-facing. Residues Ile131 to Lys151 traverse the membrane as a helical segment. Over Arg152 to Ser189 the chain is Cytoplasmic. A helical membrane pass occupies residues Val190–Gly210. The Extracellular segment spans residues Tyr211–Arg219. Residues Trp220 to Cys240 traverse the membrane as a helical segment. Residues Glu241–Arg362 are Cytoplasmic-facing. Residues Met363–Leu383 traverse the membrane as a helical segment. The Extracellular segment spans residues Thr384 to Thr413. A helical membrane pass occupies residues Leu414–Trp434. Topologically, residues Met435 to Arg448 are cytoplasmic. The chain crosses the membrane as a helical span at residues Leu449 to Gly469. Over Thr470 to Gln477 the chain is Extracellular. The helical transmembrane segment at Ala478 to Met498 threads the bilayer. Residues Ala499–Met508 lie on the Cytoplasmic side of the membrane. A helical membrane pass occupies residues Val509–Phe529. At Thr530–Tyr544 the chain is on the extracellular side. A helical membrane pass occupies residues Ile545–Gly565. The Cytoplasmic portion of the chain corresponds to Lys566–Val586.

The protein localises to the membrane. Seems to be involved in the uptake of several cations and of histidinol. The polypeptide is Protein HOL1 (HOL1) (Saccharomyces cerevisiae (strain ATCC 204508 / S288c) (Baker's yeast)).